The chain runs to 161 residues: Protein-export protein SecB (161 aa).

The protein belongs to the SecB family. As to quaternary structure, homotetramer, a dimer of dimers. One homotetramer interacts with 1 SecA dimer.

It is found in the cytoplasm. One of the proteins required for the normal export of preproteins out of the cell cytoplasm. It is a molecular chaperone that binds to a subset of precursor proteins, maintaining them in a translocation-competent state. It also specifically binds to its receptor SecA. This Ectopseudomonas mendocina (strain ymp) (Pseudomonas mendocina) protein is Protein-export protein SecB.